The following is a 537-amino-acid chain: Frizzled-4 (537 aa).

An N-terminal signal peptide occupies residues 1–36 (MAWPGTGPSSRGAPGGVGLRLGLLLQFLLLLRPTLG). At 37–212 (FGDEEERRCD…KCGYDAGLYS (176 aa)) the chain is on the extracellular side. Residues 40 to 161 (EEERRCDPIR…NDHNHMCMEG (122 aa)) form the FZ domain. 8 disulfide bridges follow: C45-C106, C53-C99, C90-C128, C117-C158, C121-C145, C181-C200, C204-C282, and C302-C377. The N-linked (GlcNAc...) asparagine glycan is linked to N59. The N-linked (GlcNAc...) asparagine glycan is linked to N144. Residues 213–243 (RSAKEFTDIWMAVWASLCFISTTFTVLTFLI) traverse the membrane as a helical segment. At 244–249 (DSSRFS) the chain is on the cytoplasmic side. The chain crosses the membrane as a helical span at residues 250–275 (YPERPIIFLSMCYNIYSIAYIVRLTV). The Extracellular segment spans residues 276–299 (GRERISCDFEEAAEPVLIQEGLKN). The chain crosses the membrane as a helical span at residues 300-333 (TGCAIIFLLMYFFGMASSIWWVILTLTWFLAAGL). At 334-336 (KWG) the chain is on the cytoplasmic side. The helical transmembrane segment at 337-365 (HEAIEMHSSYFHIAAWAIPAVKTIVILIM) threads the bilayer. Over 366 to 383 (RLVDADELTGLCYVGNQN) the chain is Extracellular. A helical membrane pass occupies residues 384-410 (LDALTGFVVAPLFTYLVIGTLFIAAGL). The Cytoplasmic portion of the chain corresponds to 411–431 (VALFKIRSNLQKDGTKTDKLE). A helical membrane pass occupies residues 432–460 (RLMVKIGVFSVLYTVPATCVIACYFYEIS). Residues 461–473 (NWALFRYSADDSN) lie on the Extracellular side of the membrane. Residues 474–495 (MAVEMLKIFMSLLVGITSGMWI) form a helical membrane-spanning segment. Residues 496 to 537 (WSAKTLHTWQKCSNRLVNSGKVKREKRGNGWVKPGKGNETVV) lie on the Cytoplasmic side of the membrane. A Lys-Thr-X-X-X-Trp motif, mediates interaction with the PDZ domain of Dvl family members motif is present at residues 499–504 (KTLHTW). A PDZ-binding motif is present at residues 535-537 (TVV).

The protein belongs to the G-protein coupled receptor Fz/Smo family. As to quaternary structure, interacts with MAGI3 and NDP. Component of a complex, at least composed of TSPAN12, FZD4 and norrin (NDP). Interacts (via FZ domain) with TSKU; TSKU competes with WNT2B for binding to FZD4, inhibiting Wnt signaling and repressing peripheral eye development. Interacts with glypican GPC3. Post-translationally, ubiquitinated by ZNRF3, leading to its degradation by the proteasome. In terms of tissue distribution, expressed in chondrocytes.

The protein localises to the cell membrane. In terms of biological role, receptor for Wnt proteins. Most frizzled receptors are coupled to the beta-catenin (CTNNB1) canonical signaling pathway, which leads to the activation of disheveled proteins, inhibition of GSK-3 kinase, nuclear accumulation of beta-catenin (CTNNB1) and activation of Wnt target genes. Plays a critical role in retinal vascularization by acting as a receptor for Wnt proteins and norrin (NDP). In retina, it can be activated by Wnt protein-binding and also by Wnt-independent signaling via binding of norrin (NDP), promoting in both cases beta-catenin (CTNNB1) accumulation and stimulation of LEF/TCF-mediated transcriptional programs. A second signaling pathway involving PKC and calcium fluxes has been seen for some family members, but it is not yet clear if it represents a distinct pathway or if it can be integrated in the canonical pathway, as PKC seems to be required for Wnt-mediated inactivation of GSK-3 kinase. Both pathways seem to involve interactions with G-proteins. May be involved in transduction and intercellular transmission of polarity information during tissue morphogenesis and/or in differentiated tissues. Activation by Wnt5A stimulates PKC activity via a G-protein-dependent mechanism. In Mus musculus (Mouse), this protein is Frizzled-4 (Fzd4).